An 87-amino-acid polypeptide reads, in one-letter code: Kawaguchipeptin peptide (87 aa).

A propeptide spanning residues 1-33 (MKNPTLLPKLTAPVERPAVTSSDLKQASSVDAA) is cleaved from the precursor. W34 carries the 3'-prenyl-2',N2-cyclotryptophan; partial lipid modification. Residues 34–44 (WLNGDNNWSTP) constitute a cross-link (cyclopeptide (Trp-Pro)). Residue L35 is modified to D-leucine; partial. A lipid anchor (3'-prenyl-2',N2-cyclotryptophan; partial) is attached at W41. A propeptide spanning residues 45-51 (FAGVNAA) is cleaved from the precursor. A lipid anchor (3'-prenyl-2',N2-cyclotryptophan; partial) is attached at W52. The cyclopeptide (Trp-Pro) cross-link spans 52–62 (WLNGDNNWSTP). D-leucine; partial is present on L53. W59 carries 3'-prenyl-2',N2-cyclotryptophan; partial lipidation. Positions 63 to 69 (FAGVNAA) are excised as a propeptide. Residue W70 is the site of 3'-prenyl-2',N2-cyclotryptophan; partial attachment. A cross-link (cyclopeptide (Trp-Pro)) is located at residues 70 to 80 (WLNGDNNWSTP). L71 carries the post-translational modification D-leucine; partial. W77 carries 3'-prenyl-2',N2-cyclotryptophan; partial lipidation. A propeptide spanning residues 81-87 (FAADGAE) is cleaved from the precursor.

Post-translationally, kawaguchipeptin A contains a D-Leu and 2 prenylated Trp, whereas kawaguchipeptin B only contains unmodified amino acids. Kawaguchipeptin A is prenylated in vivo. Upon expression in E.coli of the whole operon, Trp residues are prenylated by C-prenyltransferase KgpF. Prenylation by KgpF is likely the last enzymatic step in the biosynthetic maturation of kawaguchipeptin A.

In terms of biological role, both kawaguchipeptin A and B, which only differ by post-translational modifications, have antibacterial activities, since they inhibit the growth of the Gram-positive bacterium S.aureus at a concentration of 1 ug/mL. The polypeptide is Kawaguchipeptin peptide (Microcystis aeruginosa (strain NIES-88 / KW-MA1-3)).